Reading from the N-terminus, the 516-residue chain is Probable D,D-dipeptide-binding periplasmic protein DdpA (516 aa).

Positions 1–25 (MKRSISFRPTLLALVLATNFPVAHA) are cleaved as a signal peptide.

This sequence belongs to the bacterial solute-binding protein 5 family. In terms of assembly, the complex is composed of two ATP-binding proteins (DdpD and DdpF), two transmembrane proteins (DdpB and DdpC) and a solute-binding protein (DdpA).

Its subcellular location is the periplasm. Functionally, part of the ABC transporter complex DdpABCDF, which is probably involved in D,D-dipeptide transport. The polypeptide is Probable D,D-dipeptide-binding periplasmic protein DdpA (ddpA) (Escherichia coli (strain K12)).